A 506-amino-acid polypeptide reads, in one-letter code: DEAD-box ATP-dependent RNA helicase CshA (506 aa).

Residues 2–30 carry the Q motif motif; sequence QNFKELGISDNTVQSLESMGFKEPTPIQK. The Helicase ATP-binding domain occupies 33–203; that stretch reads IPYALQGIDI…QQFMKSPKII (171 aa). ATP is bound at residue 46–53; that stretch reads AQTGTGKT. The DEAD box signature appears at 150–153; sequence DEAD. The Helicase C-terminal domain occupies 214 to 375; that stretch reads QIEEFYTIVK…LRPPHRKEVL (162 aa). Residues 436–506 form a disordered region; it reads EKPLSRKGRN…KGRTFADHQK (71 aa). A compositionally biased stretch (basic residues) spans 468-480; sequence KRSKGYSSKKKST.

This sequence belongs to the DEAD box helicase family. CshA subfamily. Oligomerizes, may be a member of the RNA degradosome.

It localises to the cytoplasm. It carries out the reaction ATP + H2O = ADP + phosphate + H(+). In terms of biological role, DEAD-box RNA helicase possibly involved in RNA degradation. Unwinds dsRNA in both 5'- and 3'-directions, has RNA-dependent ATPase activity. The sequence is that of DEAD-box ATP-dependent RNA helicase CshA from Staphylococcus aureus (strain bovine RF122 / ET3-1).